A 257-amino-acid chain; its full sequence is Putative hydro-lyase Bcen2424_3550 (257 aa).

This sequence belongs to the D-glutamate cyclase family.

This is Putative hydro-lyase Bcen2424_3550 from Burkholderia cenocepacia (strain HI2424).